The sequence spans 452 residues: UDP-N-acetylmuramoylalanine--D-glutamate ligase (452 aa).

119-125 is an ATP binding site; that stretch reads GSNGKTT.

It belongs to the MurCDEF family.

It localises to the cytoplasm. It catalyses the reaction UDP-N-acetyl-alpha-D-muramoyl-L-alanine + D-glutamate + ATP = UDP-N-acetyl-alpha-D-muramoyl-L-alanyl-D-glutamate + ADP + phosphate + H(+). It functions in the pathway cell wall biogenesis; peptidoglycan biosynthesis. Its function is as follows. Cell wall formation. Catalyzes the addition of glutamate to the nucleotide precursor UDP-N-acetylmuramoyl-L-alanine (UMA). This is UDP-N-acetylmuramoylalanine--D-glutamate ligase from Streptococcus pyogenes serotype M28 (strain MGAS6180).